Consider the following 270-residue polypeptide: NAD kinase (270 aa).

Residue Asp-45 is the Proton acceptor of the active site. Residues Asp-45–Gly-46, Asn-121–Glu-122, Arg-147, Asp-149, Thr-160–Ser-165, and Ala-184 each bind NAD(+).

Belongs to the NAD kinase family. Requires a divalent metal cation as cofactor.

Its subcellular location is the cytoplasm. The catalysed reaction is NAD(+) + ATP = ADP + NADP(+) + H(+). Involved in the regulation of the intracellular balance of NAD and NADP, and is a key enzyme in the biosynthesis of NADP. Catalyzes specifically the phosphorylation on 2'-hydroxyl of the adenosine moiety of NAD to yield NADP. The chain is NAD kinase from Lactobacillus helveticus (strain DPC 4571).